The chain runs to 1918 residues: NFX1-type zinc finger-containing protein 1 (1918 aa).

The span at Met-1–Pro-12 shows a compositional bias: basic and acidic residues. Disordered regions lie at residues Met-1–Asn-58 and Arg-75–Gln-140. Positions Arg-30–Ala-42 are enriched in low complexity. The span at Arg-82–Trp-105 shows a compositional bias: basic and acidic residues. The segment covering Ser-120–Thr-129 has biased composition (polar residues). Residues Asp-286–Thr-313 are a coiled coil. 2 disordered regions span residues Ser-796 to Glu-819 and Thr-876 to Lys-896. The span at Glu-809–Glu-819 shows a compositional bias: acidic residues. Positions Ala-877 to Trp-887 are enriched in polar residues. A coiled-coil region spans residues Glu-886–Arg-967. NF-X1-type zinc fingers lie at residues Cys-1298 to Lys-1320, Gly-1330 to Val-1346, Cys-1382 to Glu-1400, Cys-1441 to Gln-1463, Cys-1471 to Arg-1488, and Cys-1546 to Ile-1564. The stretch at Leu-1741 to Leu-1820 forms a coiled coil. The RZ-type zinc-finger motif lies at Ile-1827–His-1898. Zn(2+) contacts are provided by Cys-1849, His-1853, Cys-1869, and Cys-1872.

This sequence belongs to the ZNFX1 family. Interacts with MAVS. As to expression, widely expressed.

Its subcellular location is the mitochondrion outer membrane. It is found in the cytoplasm. The protein localises to the stress granule. In terms of biological role, RNA-binding protein that initiates the antiviral response and is required to restrict the replication of RNA viruses. Acts as a double-stranded RNA (dsRNA) sensor that recognizes viral RNA and then interacts with MAVS to initiate the type I interferon response. Also required for immunity against some bacteria, such as mycobacteria. This Homo sapiens (Human) protein is NFX1-type zinc finger-containing protein 1.